The following is a 130-amino-acid chain: Glycine cleavage system H protein (130 aa).

Residues 25 to 106 (TALIGISDFA…PFDSWMIKVK (82 aa)) form the Lipoyl-binding domain. Position 66 is an N6-lipoyllysine (Lys-66).

The protein belongs to the GcvH family. As to quaternary structure, the glycine cleavage system is composed of four proteins: P, T, L and H. (R)-lipoate serves as cofactor.

Its function is as follows. The glycine cleavage system catalyzes the degradation of glycine. The H protein shuttles the methylamine group of glycine from the P protein to the T protein. The sequence is that of Glycine cleavage system H protein from Leptospira borgpetersenii serovar Hardjo-bovis (strain JB197).